We begin with the raw amino-acid sequence, 215 residues long: Cytochrome b6 (215 aa).

A helical membrane pass occupies residues 32–52 (IFYCIGGITFTCFIMQVASGF). Residue Cys-35 participates in heme c binding. Residues His-86 and His-100 each contribute to the heme b site. 3 helical membrane-spanning segments follow: residues 90-110 (ASMM…TGGF), 116-136 (LTWV…VTGY), and 186-206 (LHTF…FLMI). His-187 and His-202 together coordinate heme b.

It belongs to the cytochrome b family. PetB subfamily. As to quaternary structure, the 4 large subunits of the cytochrome b6-f complex are cytochrome b6, subunit IV (17 kDa polypeptide, PetD), cytochrome f and the Rieske protein, while the 4 small subunits are PetG, PetL, PetM and PetN. The complex functions as a dimer. It depends on heme b as a cofactor. Heme c is required as a cofactor.

The protein localises to the plastid. It is found in the chloroplast thylakoid membrane. Component of the cytochrome b6-f complex, which mediates electron transfer between photosystem II (PSII) and photosystem I (PSI), cyclic electron flow around PSI, and state transitions. In Mesostigma viride (Green alga), this protein is Cytochrome b6.